A 238-amino-acid chain; its full sequence is Peroxisomal biogenesis factor 11 (238 aa).

The protein belongs to the peroxin-11 family.

It is found in the mitochondrion. The protein localises to the peroxisome membrane. Functionally, involved in peroxisomal proliferation. Promotes peroxisome division and biogenesis. This Schizosaccharomyces pombe (strain 972 / ATCC 24843) (Fission yeast) protein is Peroxisomal biogenesis factor 11 (pex11).